A 538-amino-acid chain; its full sequence is ATP synthase subunit beta, mitochondrial (538 aa).

215 to 222 is an ATP binding site; that stretch reads GGAGVGKT.

It belongs to the ATPase alpha/beta chains family. Subunit of the F-type ATPase which has 2 components, CF(1) - the catalytic core - and CF(0) - the membrane proton channel. Interacts (via N-terminus) with lov-1 (via PLAT domain). Expressed in three categories of adult male sensory neurons: tail ray B neurons, HOB hook neuron and head cephalic (CEM) neurons.

It localises to the cell projection. It is found in the cilium. The protein resides in the mitochondrion. The protein localises to the mitochondrion inner membrane. It catalyses the reaction ATP + H2O + 4 H(+)(in) = ADP + phosphate + 5 H(+)(out). Mitochondrial membrane ATP synthase (F(1)F(0) ATP synthase or Complex V) produces ATP from ADP in the presence of a proton gradient across the membrane which is generated by electron transport complexes of the respiratory chain. F-type ATPases consist of two structural domains, F(1) - containing the extramembraneous catalytic core, and F(0) - containing the membrane proton channel, linked together by a central stalk and a peripheral stalk. During catalysis, ATP synthesis in the catalytic domain of F(1) is coupled via a rotary mechanism of the central stalk subunits to proton translocation. Subunits alpha and beta form the catalytic core in F(1). Rotation of the central stalk against the surrounding subunits leads to hydrolysis of ATP in three separate catalytic sites on the beta subunits. Required during male mating behavior for the response to hermaphrodite contact, acting with lov-1 and pkd-2. May be involved in polycystin signaling. The sequence is that of ATP synthase subunit beta, mitochondrial from Caenorhabditis elegans.